The chain runs to 267 residues: 2-keto-3-deoxy-L-rhamnonate aldolase (267 aa).

Residue H49 is the Proton acceptor of the active site. Q151 contacts substrate. E153 is a binding site for Mg(2+). The substrate site is built by A178 and D179. D179 serves as a coordination point for Mg(2+).

This sequence belongs to the HpcH/HpaI aldolase family. KDR aldolase subfamily. As to quaternary structure, homohexamer. The cofactor is Mg(2+).

The catalysed reaction is 2-dehydro-3-deoxy-L-rhamnonate = (S)-lactaldehyde + pyruvate. In terms of biological role, catalyzes the reversible retro-aldol cleavage of 2-keto-3-deoxy-L-rhamnonate (KDR) to pyruvate and lactaldehyde. In Shigella dysenteriae serotype 1 (strain Sd197), this protein is 2-keto-3-deoxy-L-rhamnonate aldolase.